Consider the following 564-residue polypeptide: Beta-hexosaminidase subunit B2 (564 aa).

Residues 1 to 19 (MKLKFIFLILFFIIGNSIG) form the signal peptide. 4 N-linked (GlcNAc...) asparagine glycosylation sites follow: N43, N84, N303, and N347. E357 acts as the Proton donor in catalysis. N364, N377, N439, N524, and N551 each carry an N-linked (GlcNAc...) asparagine glycan.

It belongs to the glycosyl hydrolase 20 family.

The protein resides in the lysosome. The enzyme catalyses Hydrolysis of terminal non-reducing N-acetyl-D-hexosamine residues in N-acetyl-beta-D-hexosaminides.. Its function is as follows. Responsible for the degradation of GM2 gangliosides, and a variety of other molecules containing terminal N-acetyl hexosamines. The polypeptide is Beta-hexosaminidase subunit B2 (hexb2) (Dictyostelium discoideum (Social amoeba)).